A 451-amino-acid chain; its full sequence is SH2 domain-containing protein 7 (451 aa).

The SH2 domain maps to Trp51 to Cys142. 3 disordered regions span residues Lys180–Glu232, Leu256–Met321, and Gly408–Pro436. The span at Ser221–Glu232 shows a compositional bias: low complexity. Basic and acidic residues predominate over residues Glu279–Arg291. Over residues Gln306–Gly316 the composition is skewed to polar residues. The segment covering Lys426–Pro436 has biased composition (basic and acidic residues).

The chain is SH2 domain-containing protein 7 (SH2D7) from Homo sapiens (Human).